Here is a 241-residue protein sequence, read N- to C-terminus: 3-oxoacyl-[acyl-carrier-protein] reductase FabG (241 aa).

Residues 13 to 16 (GASG), S38, 57 to 58 (KV), and N83 each bind NADP(+). Residue S135 coordinates substrate. Residue Y148 is the Proton acceptor of the active site. NADP(+) is bound by residues 148 to 152 (YCASK) and I181.

The protein belongs to the short-chain dehydrogenases/reductases (SDR) family. In terms of assembly, homotetramer.

It catalyses the reaction a (3R)-hydroxyacyl-[ACP] + NADP(+) = a 3-oxoacyl-[ACP] + NADPH + H(+). It participates in lipid metabolism; fatty acid biosynthesis. Its function is as follows. Catalyzes the NADPH-dependent reduction of beta-ketoacyl-ACP substrates to beta-hydroxyacyl-ACP products, the first reductive step in the elongation cycle of fatty acid biosynthesis. The protein is 3-oxoacyl-[acyl-carrier-protein] reductase FabG (fabG) of Rickettsia bellii (strain RML369-C).